Here is a 550-residue protein sequence, read N- to C-terminus: Glucagon-like peptide 2 receptor (550 aa).

Topologically, residues 1-173 (MRPQPSPAVP…SFRQNVDHYA (173 aa)) are extracellular. 3 disulfide bridges follow: cysteine 83/cysteine 105, cysteine 96/cysteine 137, and cysteine 118/cysteine 159. Residues asparagine 97, asparagine 113, asparagine 148, and asparagine 162 are each glycosylated (N-linked (GlcNAc...) asparagine). A helical membrane pass occupies residues 174–198 (LLYTLQLMYTVGYSVSLISLFLALT). Topologically, residues 199–210 (LFLFLRKLHCTR) are cytoplasmic. The chain crosses the membrane as a helical span at residues 211–235 (NYIHMNLFASFILKVLAVLVKDMVS). At 236–261 (HNSYSKRPDDESGWMSYLSETSVSCR) the chain is on the extracellular side. Residues 262 to 285 (SVQVLLHYFVGTNHLWLLVEGLYL) form a helical membrane-spanning segment. Topologically, residues 286-299 (HTLLEPTVFPERRL) are cytoplasmic. The chain crosses the membrane as a helical span at residues 300-321 (WPKYLVVGWAFPMLFVIPWGFA). Residues 322 to 339 (RAHLENTRCWATNGNLKI) lie on the Extracellular side of the membrane. The helical transmembrane segment at 340–362 (WWIIRGPMLLCVTVNFFIFLKIL) threads the bilayer. The Cytoplasmic portion of the chain corresponds to 363–386 (KLLISKLKAHQMCFRDYKYRLAKS). The helical transmembrane segment at 387–405 (TLLLIPLLGVHEVLFTFFP) threads the bilayer. Over 406 to 417 (DDQVQGFSKRIR) the chain is Extracellular. Residues 418-438 (LFIQLTLSSVHGFLVALQYGF) traverse the membrane as a helical segment. The Cytoplasmic segment spans residues 439–550 (ANGEVKAELR…MEEILEESEI (112 aa)).

This sequence belongs to the G-protein coupled receptor 2 family.

The protein resides in the cell membrane. Its function is as follows. This is a receptor for glucagon-like peptide 2. The activity of this receptor is mediated by G proteins which activate adenylyl cyclase. This chain is Glucagon-like peptide 2 receptor (Glp2r), found in Rattus norvegicus (Rat).